The sequence spans 1293 residues: Receptor-type tyrosine-protein phosphatase C (1293 aa).

Positions 1–25 are cleaved as a signal peptide; it reads MTMGLWLKLLAFGFALLDTEVFVTG. The Extracellular segment spans residues 26-566; sequence QTPTPSDELS…RNESTNFNAK (541 aa). The tract at residues 43-174 is disordered; it reads LPQSDPLPAR…STTDISSGAS (132 aa). Polar residues-rich tracts occupy residues 53 to 72, 88 to 110, and 149 to 169; these read TTESTPPSISERGNGSSETT, QPDSQTPSAGGADTQTFSSQADN, and LARNSSAASPTHTSNVSTTDI. N66 carries an N-linked (GlcNAc...) asparagine glycan. N-linked (GlcNAc...) asparagine glycosylation is found at N152, N163, N209, N213, N220, N255, N260, N292, N313, N324, N349, N418, N429, N459, and N491. Fibronectin type-III domains follow at residues 376–472 and 473–568; these read IPET…TKAD and RPDK…AKAL. Residues 567–588 form a helical membrane-spanning segment; the sequence is ALIIFLVFLIIVTSIALLVVLY. Topologically, residues 589–1293 are cytoplasmic; sequence KIYDLRKKRS…SASPAPTQSS (705 aa). 2 consecutive Tyrosine-protein phosphatase domains span residues 642 to 901 and 933 to 1216; these read FLAE…LVEY and LEAE…IASI. Y672 carries the phosphotyrosine modification. Substrate-binding positions include D810, 842–848, and Q886; that span reads CSAGVGR. The Phosphocysteine intermediate role is filled by C842. Phosphoserine occurs at positions 964, 983, 986, 990, 993, 994, and 998. The tract at residues 980–1003 is disordered; it reads LEMSKESEPESDESSDDDSDSEET. The span at 988-1001 shows a compositional bias: acidic residues; the sequence is PESDESSDDDSDSE. C1157 (phosphocysteine intermediate) is an active-site residue. Residue S1229 is modified to Phosphoserine. Positions 1240–1293 are disordered; the sequence is DGGKQDANCVRPDGPLNKAQEDSRGVGTPEPTNSAEEPEHAANGSASPAPTQSS. T1267 bears the Phosphothreonine mark. Residues 1283–1293 are compositionally biased toward polar residues; that stretch reads GSASPAPTQSS. S1286 bears the Phosphoserine mark.

Belongs to the protein-tyrosine phosphatase family. Receptor class 1/6 subfamily. As to quaternary structure, interacts with SKAP1. Interacts with DPP4; the interaction is enhanced in an interleukin-12-dependent manner in activated lymphocytes. Binds GANAB and PRKCSH. Interacts with CD53; this interaction stabilizes PTPRC on the membrane and is required for optimal phosphatase activity. Interacts with CLEC10A. In terms of processing, heavily N- and O-glycosylated.

It localises to the cell membrane. The protein resides in the membrane raft. Its subcellular location is the synapse. It catalyses the reaction O-phospho-L-tyrosyl-[protein] + H2O = L-tyrosyl-[protein] + phosphate. In terms of biological role, protein tyrosine-protein phosphatase required for T-cell activation through the antigen receptor. Acts as a positive regulator of T-cell coactivation upon binding to DPP4. The first PTPase domain has enzymatic activity, while the second one seems to affect the substrate specificity of the first one. Upon T-cell activation, recruits and dephosphorylates SKAP1 and FYN. Dephosphorylates LYN, and thereby modulates LYN activity. Interacts with CLEC10A at antigen presenting cell-T cell contact; CLEC10A on immature dendritic cells recognizes Tn antigen-carrying PTPRC/CD45 receptor on effector T cells and modulates T cell activation threshold to limit autoreactivity. This chain is Receptor-type tyrosine-protein phosphatase C, found in Mus musculus (Mouse).